The following is a 1835-amino-acid chain: Protein TIC 214 (1835 aa).

The next 6 membrane-spanning stretches (helical) occupy residues 25–45, 64–84, 87–107, 124–144, 172–192, and 221–241; these read VGLYYGFLTTFSIGPSYLFLL, FITGQLMMFISIYYAPLHLAL, PHTITVLVLPYLLFHFFWNNH, LSIQCVFLNNLIFQLFNHFIL, VGWLIGHIFFMKWVGLVLFWI, and IFSILLFITCVYYLGRIPSPI. The segment covering 246–258 has biased composition (basic and acidic residues); sequence LKETSETEERGES. Disordered stretches follow at residues 246–304, 735–759, and 1535–1578; these read LKET…DGNQ, EFKTSDSEEKEAKEKEKTKEEKKEE, and NRNQ…KRQS. A compositionally biased stretch (acidic residues) spans 259–268; that stretch reads AEETDVEIET. Basic and acidic residues predominate over residues 1553–1569; that stretch reads PRNRQKDLEKDYAESDI.

The protein belongs to the TIC214 family. As to quaternary structure, part of the Tic complex.

It localises to the plastid. It is found in the chloroplast inner membrane. In terms of biological role, involved in protein precursor import into chloroplasts. May be part of an intermediate translocation complex acting as a protein-conducting channel at the inner envelope. This Liriodendron tulipifera (Tuliptree) protein is Protein TIC 214.